We begin with the raw amino-acid sequence, 748 residues long: Spidroin-1 (748 aa).

25 repeat units span residues 1–25 (QGAG…GGQG), 26–38 (AGQG…GGQG), 39–66 (AGQG…GSQG), 67–96 (AGRG…GSQG), 97–130 (AGRG…GNQG), 131–158 (AGRG…GSQG), 159–191 (AGRG…GGQG), 192–204 (AGQG…GSQG), 205–235 (AGRG…GGQG), 236–262 (AGQG…GSQG), 263–292 (AGRG…GGQG), 293–305 (AGQG…GSQG), 306–333 (AGRG…GGQG), 334–360 (AGQG…GSQG), 361–394 (AGRG…GSQG), 395–424 (AGRG…GNQG), 425–458 (AGRG…GNQG), 459–485 (AGRG…GSQG), 486–512 (AGRG…RGQG), 513–525 (AGQG…GSQG), 526–555 (SGRG…GGQG), 556–582 (AGQG…GSQG), 583–612 (AGRG…GGQG), 613–642 (VGRG…VGSG), and 643–655 (ASAA…RLSS). Positions 1 to 655 (QGAGAAAAAA…ASAAASRLSS (655 aa)) are 25 X approximate tandem repeats.

The protein belongs to the silk fibroin family. In terms of assembly, major subunit, with spidroin 2, of the dragline silk.

The protein localises to the secreted. Its subcellular location is the extracellular space. Its function is as follows. Spiders' major ampullate silk possesses unique characteristics of strength and elasticity. Fibroin consists of pseudocrystalline regions of antiparallel beta-sheet interspersed with elastic amorphous segments. The sequence is that of Spidroin-1 from Trichonephila clavipes (Golden silk orbweaver).